The sequence spans 69 residues: Large ribosomal subunit protein bL31 (69 aa).

Residues Cys-16, Cys-18, Cys-38, and Cys-41 each contribute to the Zn(2+) site.

The protein belongs to the bacterial ribosomal protein bL31 family. Type A subfamily. In terms of assembly, part of the 50S ribosomal subunit. Zn(2+) serves as cofactor.

In terms of biological role, binds the 23S rRNA. The sequence is that of Large ribosomal subunit protein bL31 from Thermobifida fusca (strain YX).